We begin with the raw amino-acid sequence, 87 residues long: U3-theraphotoxin-Hhn1n (87 aa).

The N-terminal stretch at 1–24 (MVNMKASMFLTFAGLVLLFVVCYA) is a signal peptide. A propeptide spanning residues 25–52 (SESEEKEFPKEMLSSIFAVDNDFKQEER) is cleaved from the precursor. 3 disulfides stabilise this stretch: Cys-54–Cys-67, Cys-61–Cys-72, and Cys-66–Cys-79.

This sequence belongs to the neurotoxin 10 (Hwtx-1) family. 51 (Hntx-8) subfamily. Hntx-8 sub-subfamily. Expressed by the venom gland.

It localises to the secreted. In terms of biological role, weakly inhibits Kv11.1/KCNH2/ERG1, Kv1.2/KCNA2, Kv1.3/KCNA3, and Kv2.1/KCNB1. The protein is U3-theraphotoxin-Hhn1n of Cyriopagopus hainanus (Chinese bird spider).